The chain runs to 123 residues: Large ribosomal subunit protein uL29 (123 aa).

Belongs to the universal ribosomal protein uL29 family. As to quaternary structure, component of the large ribosomal subunit.

The protein resides in the cytoplasm. Component of the large ribosomal subunit. The ribosome is a large ribonucleoprotein complex responsible for the synthesis of proteins in the cell. This chain is Large ribosomal subunit protein uL29 (rpl35), found in Xenopus tropicalis (Western clawed frog).